Reading from the N-terminus, the 420-residue chain is Ribulose bisphosphate carboxylase (420 aa).

Catalysis depends on lysine 155, which acts as the Proton acceptor. Residue lysine 157 coordinates substrate. The Mg(2+) site is built by lysine 181, aspartate 183, and glutamate 184. Lysine 181 carries the N6-carboxylysine modification. Histidine 273 functions as the Proton acceptor in the catalytic mechanism. Residues arginine 274, histidine 306, 343–345 (SGG), and 365–368 (QAGG) contribute to the substrate site.

Belongs to the RuBisCO large chain family. Type III subfamily. In terms of assembly, homodimer or homodecamer. In contrast to form I RuBisCO, the form III RuBisCO is composed solely of large subunits. It depends on Mg(2+) as a cofactor.

It catalyses the reaction 2 (2R)-3-phosphoglycerate + 2 H(+) = D-ribulose 1,5-bisphosphate + CO2 + H2O. The catalysed reaction is D-ribulose 1,5-bisphosphate + O2 = 2-phosphoglycolate + (2R)-3-phosphoglycerate + 2 H(+). Catalyzes the addition of molecular CO(2) and H(2)O to ribulose 1,5-bisphosphate (RuBP), generating two molecules of 3-phosphoglycerate (3-PGA). Functions in an archaeal AMP degradation pathway, together with AMP phosphorylase and R15P isomerase. This Pyrococcus furiosus (strain ATCC 43587 / DSM 3638 / JCM 8422 / Vc1) protein is Ribulose bisphosphate carboxylase.